The following is a 213-amino-acid chain: Redox-sensing transcriptional repressor Rex (213 aa).

The segment at residues 16–55 is a DNA-binding region (H-T-H motif); it reads IYYRYLRLLSNSGKNRVSSTELAEAVKVDSATIRRDFSYF. Position 90–95 (90–95) interacts with NAD(+); the sequence is GVGNLG.

This sequence belongs to the transcriptional regulatory Rex family. As to quaternary structure, homodimer.

The protein localises to the cytoplasm. Functionally, modulates transcription in response to changes in cellular NADH/NAD(+) redox state. This chain is Redox-sensing transcriptional repressor Rex, found in Ligilactobacillus salivarius (strain UCC118) (Lactobacillus salivarius).